Reading from the N-terminus, the 521-residue chain is MNLPQQQPPAAAPQQPQSRRSPVSPQLQQQHQAAAAAFLQQRNSYNHHQPLLKQSPWSNHQNSGWGTASMSWGAMHGRDHRRSGNMGIPGTMNQISPLKKPFSGNVIAPPKFTRSTPSLTPKSWIEDNVFRTDNNSNTLLPLQVRSSLQLPAWGSDSLQDSWCTAAGTSRIDQDRSRMYDSLNMHSLENSLIDIMRAEHDPLKGRLSYPHPGTDNLLMLNGRSSLFPIDDSLLDDGHSDQVGVLNSPTCYSAHQNGERIERFSRKVFVGGLPPDIDEDEITASFRRFGPLVVDWPHKAESKSYFPPKGYAFLLFQEESSVQALIDACIEEDGKLYLCVSSPTIKDKPVQIRPWNLSDSDFVMDGSQPLDPRKTIFVGGVPRPLRAVELAMIMDRLYGGVCYAGIDTDPELKYPKGAGRVAFSNQQSYIAAISARFVQLQHGDIDKRVEVKPYVLDDQMCDECQGARCGGKFAPFFCANVTCLQYYCEFCWANIHSRAGREFHKPLVKEGADRPRQIHFRWN.

The span at Met1–Ala11 shows a compositional bias: pro residues. 2 disordered regions span residues Met1–Ala35 and Pro50–Ile88. Over residues Ala12–Ala35 the composition is skewed to low complexity. Position 21 is a phosphoserine (Ser21). Residues Ser55–Met70 are compositionally biased toward polar residues. 2 RRM domains span residues Arg264 to Leu355 and Lys372 to Leu454.

The protein belongs to the RRM CPEB family. In terms of assembly, interacts with TENT2/GLD2. As to expression, expressed in embryo, cerebellum, salivary gland, thymus, heart, liver, lung, spleen, kidney, intestine, ovary and round spermatids. Weakly expressed in granular cells of dentate gyrus and the pyramidal cells of CA3 and CA1 of the hippocampus.

The protein localises to the cytoplasm. In terms of biological role, may play a role in translational regulation of stored mRNAs in transcriptionally inactive haploid spermatids. Binds to poly(U) RNA oligomers. Required for cell cycle progression, specifically for the transition from metaphase to anaphase. This Mus musculus (Mouse) protein is Cytoplasmic polyadenylation element-binding protein 2 (Cpeb2).